An 865-amino-acid polypeptide reads, in one-letter code: AdoMet-dependent rRNA methyltransferase SPB1 (865 aa).

The S-adenosyl-L-methionine site is built by glycine 56, tryptophan 58, aspartate 76, aspartate 92, and aspartate 117. Residue lysine 157 is the Proton acceptor of the active site. Coiled coils occupy residues 358-400 and 462-492; these read ESMD…VRMQ and GETD…RKAA. 2 disordered regions span residues 370-396 and 443-676; these read LEKL…QKDI and VVAS…TKDG. A compositionally biased stretch (basic and acidic residues) spans 386–396; that stretch reads RKENERKQKDI. Residues 463 to 483 show a composition bias toward acidic residues; that stretch reads ETDDESDEELDRLETELDDMY. Positions 484–497 are enriched in basic and acidic residues; the sequence is DQFRERKAASDAKY. Residues 526–545 show a composition bias toward acidic residues; the sequence is ISDDSELEEESSGDSDDEDD. The segment covering 556 to 566 has biased composition (polar residues); sequence LDTTPSDNSGL. The span at 600-609 shows a compositional bias: acidic residues; sequence GEDEDADMED. Composition is skewed to basic and acidic residues over residues 610-627 and 659-676; these read TVSK…ADKK and KSGK…TKDG. Residues 762–789 adopt a coiled-coil conformation; it reads REAKGRKKMKAAQRLEKLKKKSDLLVNE.

Belongs to the class I-like SAM-binding methyltransferase superfamily. RNA methyltransferase RlmE family. SPB1 subfamily. Component of the nucleolar and nucleoplasmic pre-60S ribosomal particle.

Its subcellular location is the nucleus. The protein resides in the nucleolus. It catalyses the reaction a ribonucleotide in rRNA + S-adenosyl-L-methionine = a 2'-O-methylribonucleotide in rRNA + S-adenosyl-L-homocysteine + H(+). Required for proper assembly of pre-ribosomal particles during the biogenesis of the 60S ribosomal subunit. The protein is AdoMet-dependent rRNA methyltransferase SPB1 of Pyricularia oryzae (strain 70-15 / ATCC MYA-4617 / FGSC 8958) (Rice blast fungus).